A 205-amino-acid polypeptide reads, in one-letter code: Peptidyl-prolyl cis-trans isomerase B (205 aa).

Residues 1–20 form the signal peptide; sequence MKFSGLWCWLLLFLSVNVIA. In terms of domain architecture, PPIase cyclophilin-type spans 39 to 198; sequence FFDIEHGEEK…EAVKIAKCGE (160 aa).

This sequence belongs to the cyclophilin-type PPIase family. PPIase B subfamily.

The protein resides in the secreted. The catalysed reaction is [protein]-peptidylproline (omega=180) = [protein]-peptidylproline (omega=0). With respect to regulation, cyclosporin A (CsA) inhibits CYPB. PPIases accelerate the folding of proteins. It catalyzes the cis-trans isomerization of proline imidic peptide bonds in oligopeptides. In Saccharomyces cerevisiae (strain ATCC 204508 / S288c) (Baker's yeast), this protein is Peptidyl-prolyl cis-trans isomerase B (CPR2).